The primary structure comprises 130 residues: Universal stress protein MSMEG_4207 (130 aa).

Lysine 104 is modified (N6-acetyllysine).

The protein belongs to the universal stress protein A family. Acetylated on Lys-104 by PatA in the presence of acetyl-CoA as an acetyl donor.

In Mycolicibacterium smegmatis (strain ATCC 700084 / mc(2)155) (Mycobacterium smegmatis), this protein is Universal stress protein MSMEG_4207.